A 611-amino-acid polypeptide reads, in one-letter code: Phosphomethylpyrimidine synthase (611 aa).

Substrate contacts are provided by residues asparagine 212, methionine 241, tyrosine 270, histidine 306, 326 to 328 (SRG), 367 to 370 (DGLR), and glutamate 406. Residue histidine 410 participates in Zn(2+) binding. Substrate is bound at residue tyrosine 433. Histidine 474 contributes to the Zn(2+) binding site. Residues cysteine 554, cysteine 557, and cysteine 562 each coordinate [4Fe-4S] cluster.

It belongs to the ThiC family. In terms of assembly, homodimer. [4Fe-4S] cluster serves as cofactor.

The catalysed reaction is 5-amino-1-(5-phospho-beta-D-ribosyl)imidazole + S-adenosyl-L-methionine = 4-amino-2-methyl-5-(phosphooxymethyl)pyrimidine + CO + 5'-deoxyadenosine + formate + L-methionine + 3 H(+). The protein operates within cofactor biosynthesis; thiamine diphosphate biosynthesis. Catalyzes the synthesis of the hydroxymethylpyrimidine phosphate (HMP-P) moiety of thiamine from aminoimidazole ribotide (AIR) in a radical S-adenosyl-L-methionine (SAM)-dependent reaction. The chain is Phosphomethylpyrimidine synthase from Bartonella bacilliformis (strain ATCC 35685 / KC583 / Herrer 020/F12,63).